Consider the following 563-residue polypeptide: NAD(P)H-quinone oxidoreductase chain 4 (563 aa).

Transmembrane regions (helical) follow at residues 25–45 (FPWLSLSILFPIVGAFLVPFI), 56–76 (WFALGIALVTFLITVAAYLYG), 90–110 (VSWLPDLGLTWAVGADGISMP), 111–131 (LILLTSFITALAVLAAWPVTF), 133–153 (PKLFFFLILAMDGGQIAVFAV), 157–177 (LLFFLAWELELLPVYLLLAIW), 189–209 (FIIYTAGSSLFILLVALAMGF), 230–250 (GFQLLCYAGLLIAFGVKLPIV), 264–284 (TAPVHMLLAGILLKMGGYALM), 298–318 (FAPLLIVLGVVNIIYAALTSF), 335–355 (MGFVLIGIGSFSALGTSGAML), 356–376 (QMISHGLIGASLFFLVGATYD), 397–417 (FALWTVCALASLALPGMSGFV), 438–458 (IVIAGLAAIGVILTPIYLLSM), and 485–505 (VYIISCLLVPIIGIGLYPRLM).

The protein belongs to the complex I subunit 4 family.

The protein localises to the cellular thylakoid membrane. The enzyme catalyses a plastoquinone + NADH + (n+1) H(+)(in) = a plastoquinol + NAD(+) + n H(+)(out). The catalysed reaction is a plastoquinone + NADPH + (n+1) H(+)(in) = a plastoquinol + NADP(+) + n H(+)(out). Functionally, NDH-1 shuttles electrons from NAD(P)H, via FMN and iron-sulfur (Fe-S) centers, to quinones in the respiratory chain. The immediate electron acceptor for the enzyme in this species is believed to be plastoquinone. Couples the redox reaction to proton translocation (for every two electrons transferred, four hydrogen ions are translocated across the cytoplasmic membrane), and thus conserves the redox energy in a proton gradient. The polypeptide is NAD(P)H-quinone oxidoreductase chain 4 (Prochlorococcus marinus (strain MIT 9313)).